The following is a 504-amino-acid chain: Maturase K (504 aa).

The protein belongs to the intron maturase 2 family. MatK subfamily.

It is found in the plastid. It localises to the chloroplast. In terms of biological role, usually encoded in the trnK tRNA gene intron. Probably assists in splicing its own and other chloroplast group II introns. The chain is Maturase K from Rorippa amphibia (Great yellow-cress).